The following is a 790-amino-acid chain: Aryl hydrocarbon receptor nuclear translocator (790 aa).

The segment covering 1 to 25 (MAATTANPEMTSDVPSLGPNITSGN) has biased composition (polar residues). The tract at residues 1–98 (MAATTANPEM…LARENHSEIE (98 aa)) is disordered. Position 2 is an N-acetylalanine (A2). A Glycyl lysine isopeptide (Lys-Gly) (interchain with G-Cter in SUMO2) cross-link involves residue K58. The segment covering 60-98 (LRCDEDQMSNDKERFARSDDEQSSADKERLARENHSEIE) has biased composition (basic and acidic residues). Phosphoserine is present on S77. Positions 88–128 (RLARENHSEIERRRRNKMTAYITELSDIVPTCSALARKPDK) are DNA-binding. The region spanning 89–142 (LARENHSEIERRRRNKMTAYITELSDIVPTCSALARKPDKLTILRMAVSHMKSL) is the bHLH domain. Positions 112–168 (LSDIVPTCSALARKPDKLTILRMAVSHMKSLRGTGNTSTDGSYKPSFLTDQELKHLI) are required for heterodimer formation with HIF1A. Residues 112-264 (LSDIVPTCSA…MCMGSRRSFI (153 aa)) form a required for heterodimer formation with EPAS1 region. PAS domains are found at residues 161 to 235 (DQEL…LTGR) and 349 to 419 (PNCT…VKLK). Residues 167–171 (LILEA) form a mediates the transcription activity and dimerization of the AHR:ARNT complex region. The 44-residue stretch at 424–467 (SVMFRFRSKNREWLWTRTSSFTFQNPYSDEIEYIICTNTNVKNS) folds into the PAC domain. Polar residues-rich tracts occupy residues 465 to 480 (KNSS…NPIQ) and 629 to 672 (HSNP…GNFQ). Disordered regions lie at residues 465–494 (KNSS…PLEV), 629–695 (HSNP…AAAY), and 729–790 (QWQG…SFSE). Over residues 673–695 (SPSSFSSMSLSSTSTASSGAAAY) the composition is skewed to low complexity. A compositionally biased stretch (polar residues) spans 741 to 758 (SSEQHVQQPSTQQPNQPE).

Monomer. Homodimer only upon binding to a DNA. Efficient DNA binding requires dimerization with another bHLH protein. Interacts with TACC3. Interacts with HIF1A, EPAS1, NPAS1 and NPAS3; forms a heterodimer that binds core DNA sequence 5'-TACGTG-3' within the hypoxia response element (HRE) of target gene promoters. Forms a heterodimer with AHRR, as well as with other bHLH proteins. Interacts with NOCA7. Interacts with TACC3. Interacts with AHR; the heterodimer ARNT:AHR binds to core DNA sequence 5'-TGCGTG-3' within the dioxin response element (DRE) of target gene promoters and activates their transcription. Interacts with SIM1 and NPAS4. As to expression, was expressed at almost the same level in all tissues except for the heart, liver, and small intestine.

It is found in the nucleus. Its function is as follows. Required for activity of the AHR. Upon ligand binding, AHR translocates into the nucleus, where it heterodimerizes with ARNT and induces transcription by binding to xenobiotic response elements (XRE). Not required for the ligand-binding subunit to translocate from the cytosol to the nucleus after ligand binding. The complex initiates transcription of genes involved in the regulation of a variety of biological processes, including angiogenesis, hematopoiesis, drug and lipid metabolism, cell motility and immune modulation. The heterodimer binds to core DNA sequence 5'-TACGTG-3' within the hypoxia response element (HRE) of target gene promoters and functions as a transcriptional regulator of the adaptive response to hypoxia. The heterodimer ARNT:AHR binds to core DNA sequence 5'-TGCGTG-3' within the dioxin response element (DRE) of target gene promoters and activates their transcription. In Oryctolagus cuniculus (Rabbit), this protein is Aryl hydrocarbon receptor nuclear translocator (ARNT).